The chain runs to 371 residues: tRNA (guanine(26)-N(2))-dimethyltransferase (371 aa).

In terms of domain architecture, Trm1 methyltransferase spans 4-368 (VEVTEGRTRF…APLPVLEKVV (365 aa)). Residues Arg41, Arg66, Asp82, Asp108, and Ala109 each coordinate S-adenosyl-L-methionine. Positions 237, 240, 256, and 259 each coordinate Zn(2+).

It belongs to the class I-like SAM-binding methyltransferase superfamily. Trm1 family.

It carries out the reaction guanosine(26) in tRNA + 2 S-adenosyl-L-methionine = N(2)-dimethylguanosine(26) in tRNA + 2 S-adenosyl-L-homocysteine + 2 H(+). Dimethylates a single guanine residue at position 26 of a number of tRNAs using S-adenosyl-L-methionine as donor of the methyl groups. This chain is tRNA (guanine(26)-N(2))-dimethyltransferase, found in Methanoculleus marisnigri (strain ATCC 35101 / DSM 1498 / JR1).